The chain runs to 218 residues: Small ribosomal subunit protein uS5 (218 aa).

Positions 1–45 are disordered; the sequence is MPGRQRRDGGNGPAGQNSNGPEGRDNRRGGGDRRGGGDRRDNAAE. A compositionally biased stretch (basic and acidic residues) spans 22-45; sequence EGRDNRRGGGDRRGGGDRRDNAAE. One can recognise an S5 DRBM domain in the interval 48-111; that stretch reads QLERVVAINR…EEARKGFFRV (64 aa).

It belongs to the universal ribosomal protein uS5 family. Part of the 30S ribosomal subunit. Contacts proteins S4 and S8.

Functionally, with S4 and S12 plays an important role in translational accuracy. Its function is as follows. Located at the back of the 30S subunit body where it stabilizes the conformation of the head with respect to the body. The sequence is that of Small ribosomal subunit protein uS5 from Nocardia farcinica (strain IFM 10152).